A 382-amino-acid chain; its full sequence is 3-ketosteroid-9-alpha-monooxygenase, oxygenase component (382 aa).

A Rieske domain is found at 20 to 122 (WHCLGLSRTF…TMEKHGQLFV (103 aa)). Residues Cys61, His63, Cys80, and His83 each contribute to the [2Fe-2S] cluster site. 4 residues coordinate Fe cation: Asn169, His175, His180, and Asp298.

In terms of assembly, homotrimer. The two-component system 3-ketosteroid-9-alpha-monooxygenase is composed of an oxygenase component KshA and a reductase component KshB. It depends on [2Fe-2S] cluster as a cofactor. The cofactor is Fe cation.

The enzyme catalyses androsta-1,4-diene-3,17-dione + 2 reduced [2Fe-2S]-[ferredoxin] + O2 + 2 H(+) = 9alpha-hydroxyandrosta-1,4-diene-3,17-dione + 2 oxidized [2Fe-2S]-[ferredoxin] + H2O. Functionally, in vitro, catalyzes the introduction of a 9alpha-hydroxyl moiety into the ring B of 3-ketosteroid substrates such as 1,4-androstadiene-3,17-dione (ADD), 4-androstene-3,17-dione (AD), 4-androstene-17beta-ol-3-one (testosterone), 4-pregnene-3,20-dione (progesterone), 23,24-bisnorcholesta-4-ene-22-oate and 23,24-bisnorcholesta-1,4-diene-22-oate. This chain is 3-ketosteroid-9-alpha-monooxygenase, oxygenase component, found in Rhodococcus rhodochrous.